The chain runs to 210 residues: 2-hydroxy-3-keto-5-methylthiopentenyl-1-phosphate phosphatase (210 aa).

This sequence belongs to the HAD-like hydrolase superfamily. MtnX family.

The enzyme catalyses 2-hydroxy-5-methylsulfanyl-3-oxopent-1-enyl phosphate + H2O = 1,2-dihydroxy-5-(methylsulfanyl)pent-1-en-3-one + phosphate. Its pathway is amino-acid biosynthesis; L-methionine biosynthesis via salvage pathway; L-methionine from S-methyl-5-thio-alpha-D-ribose 1-phosphate: step 4/6. Its function is as follows. Dephosphorylates 2-hydroxy-3-keto-5-methylthiopentenyl-1-phosphate (HK-MTPenyl-1-P) yielding 1,2-dihydroxy-3-keto-5-methylthiopentene (DHK-MTPene). This Microcystis aeruginosa (strain NIES-843 / IAM M-2473) protein is 2-hydroxy-3-keto-5-methylthiopentenyl-1-phosphate phosphatase.